The chain runs to 499 residues: Cytochrome P450 71A27 (499 aa).

Residues 3 to 23 (MILISLCLTTLLAFLFLKPLL) traverse the membrane as a helical segment. Residue Cys-438 participates in heme binding.

The protein belongs to the cytochrome P450 family. Requires heme as cofactor.

The protein localises to the membrane. This Arabidopsis thaliana (Mouse-ear cress) protein is Cytochrome P450 71A27 (CYP71A27).